A 290-amino-acid polypeptide reads, in one-letter code: Ribosomal RNA small subunit methyltransferase A (290 aa).

Asn27, Leu29, Gly54, Glu75, Asp100, and Asn125 together coordinate S-adenosyl-L-methionine.

This sequence belongs to the class I-like SAM-binding methyltransferase superfamily. rRNA adenine N(6)-methyltransferase family. RsmA subfamily.

Its subcellular location is the cytoplasm. It catalyses the reaction adenosine(1518)/adenosine(1519) in 16S rRNA + 4 S-adenosyl-L-methionine = N(6)-dimethyladenosine(1518)/N(6)-dimethyladenosine(1519) in 16S rRNA + 4 S-adenosyl-L-homocysteine + 4 H(+). Functionally, specifically dimethylates two adjacent adenosines (A1518 and A1519) in the loop of a conserved hairpin near the 3'-end of 16S rRNA in the 30S particle. May play a critical role in biogenesis of 30S subunits. The sequence is that of Ribosomal RNA small subunit methyltransferase A from Streptococcus sanguinis (strain SK36).